The sequence spans 167 residues: Photosystem I assembly protein Ycf3 (167 aa).

TPR repeat units lie at residues Ala-35–Ala-68, Ser-72–Leu-105, and Gly-120–Asn-153.

Belongs to the Ycf3 family.

The protein localises to the plastid. It localises to the chloroplast thylakoid membrane. Essential for the assembly of the photosystem I (PSI) complex. May act as a chaperone-like factor to guide the assembly of the PSI subunits. In Pleurastrum terricola (Filamentous green alga), this protein is Photosystem I assembly protein Ycf3.